The chain runs to 480 residues: MTLSFTARWRDELPATYTALLPTPLKNARLIWYNDKLAQQLAIPASLFDATNGAGVWGGETLLPGMSPVAQVYSGHQFGVWAGQLGDGRGILLGEQLLADGSTLDWHLKGAGLTPYSRMGDGRAVLRSTIRESLASEAMHYLGIPTTRALSIVASDTPVQRETQETGAMLMRLAQSHMRFGHFEHFYYRREPEKVQQLADFAIRHYWPQWQDVAEKYALWFEEVAARTGRLIAEWQTVGFAHGVMNTDNMSILGLTIDYGPFGFLDDYDPGFIGNHSDHQGRYRFDNQPSVALWNLQRLAQTLTPFIEIDALNRALDRYQDALLTHYGQRMRQKLGFFTEQKDDNALLNELFSLMAREGSDYTRTFRMLSHTEQQSASSPLRDTFIDRAAFDAWFDRYRARLRTEAVDDALRQQQMQRVNPAVVLRNWLAQRAIDAAEQGDMAELHRLHEVLRQPFTDRDDDYASRPPEWGKRLEVSCSS.

Gly-86, Gly-88, Arg-89, Lys-109, Asp-121, Gly-122, Arg-172, and Arg-179 together coordinate ATP. Asp-248 serves as the catalytic Proton acceptor. Mg(2+)-binding residues include Asn-249 and Asp-258. Asp-258 serves as a coordination point for ATP.

It belongs to the SELO family. Mg(2+) is required as a cofactor. Mn(2+) serves as cofactor.

The enzyme catalyses L-seryl-[protein] + ATP = 3-O-(5'-adenylyl)-L-seryl-[protein] + diphosphate. It catalyses the reaction L-threonyl-[protein] + ATP = 3-O-(5'-adenylyl)-L-threonyl-[protein] + diphosphate. It carries out the reaction L-tyrosyl-[protein] + ATP = O-(5'-adenylyl)-L-tyrosyl-[protein] + diphosphate. The catalysed reaction is L-histidyl-[protein] + UTP = N(tele)-(5'-uridylyl)-L-histidyl-[protein] + diphosphate. The enzyme catalyses L-seryl-[protein] + UTP = O-(5'-uridylyl)-L-seryl-[protein] + diphosphate. It catalyses the reaction L-tyrosyl-[protein] + UTP = O-(5'-uridylyl)-L-tyrosyl-[protein] + diphosphate. Functionally, nucleotidyltransferase involved in the post-translational modification of proteins. It can catalyze the addition of adenosine monophosphate (AMP) or uridine monophosphate (UMP) to a protein, resulting in modifications known as AMPylation and UMPylation. The chain is Protein nucleotidyltransferase YdiU from Salmonella paratyphi B (strain ATCC BAA-1250 / SPB7).